The primary structure comprises 188 residues: Gamma-glutamylcyclotransferase (188 aa).

Position 19 to 22 (19 to 22 (YFAY)) interacts with substrate. The active-site Proton acceptor is the glutamate 98. Serine 173 carries the phosphoserine modification.

It belongs to the gamma-glutamylcyclotransferase family. Homodimer.

It carries out the reaction an alpha-(gamma-L-glutamyl)-L-amino acid = 5-oxo-L-proline + an L-alpha-amino acid. Functionally, catalyzes the formation of 5-oxoproline from gamma-glutamyl dipeptides and may play a significant role in glutathione homeostasis. Induces release of cytochrome c from mitochondria with resultant induction of apoptosis. This chain is Gamma-glutamylcyclotransferase (Ggct), found in Mus musculus (Mouse).